A 1370-amino-acid chain; its full sequence is DNA-directed RNA polymerase subunit beta (1370 aa).

Belongs to the RNA polymerase beta chain family. In terms of assembly, the RNAP catalytic core consists of 2 alpha, 1 beta, 1 beta' and 1 omega subunit. When a sigma factor is associated with the core the holoenzyme is formed, which can initiate transcription.

The catalysed reaction is RNA(n) + a ribonucleoside 5'-triphosphate = RNA(n+1) + diphosphate. In terms of biological role, DNA-dependent RNA polymerase catalyzes the transcription of DNA into RNA using the four ribonucleoside triphosphates as substrates. The chain is DNA-directed RNA polymerase subunit beta from Albidiferax ferrireducens (strain ATCC BAA-621 / DSM 15236 / T118) (Rhodoferax ferrireducens).